Here is a 490-residue protein sequence, read N- to C-terminus: Transcription factor lin-26 (490 aa).

Disordered stretches follow at residues 96-176 (KYKD…PLHQ), 236-262 (TPEYDDNHHSETISKASSEDLKTEPDS), and 302-326 (ASKPTTPASKRRNTDSNGAPSKKHR). The interval 101–110 (SSSPESPSTT) is PEST. The segment covering 101–120 (SSSPESPSTTASTAAQHTPP) has biased composition (low complexity). 2 stretches are compositionally biased toward polar residues: residues 123-132 (AVSTPTSINT) and 151-176 (NLSTKKVSPSSIEKQLQRTSHNPLHQ). Over residues 236–260 (TPEYDDNHHSETISKASSEDLKTEP) the composition is skewed to basic and acidic residues. The C2H2-type; degenerate zinc-finger motif lies at 353–381 (YKCALCGKPTTLNSTGSRWNLLRHVIMIH).

Expressed in somatic gonads and germline precursors until the 50-cell stage. After the 100-cell stage, expression is seen in differentiating hypodermal and support cells (at protein level).

Its subcellular location is the nucleus. In terms of biological role, probable transcription factor. Required to specify the fates of hypodermal and neuron-associated support cells. Functions during vulval development, playing a role in vulval precursor cell fate specification. Positively modulates expression of homeobox protein lin-39, perhaps by binding to regulatory regions of the lin-39 gene, acting in the vulval lineage. The sequence is that of Transcription factor lin-26 from Caenorhabditis elegans.